The following is a 329-amino-acid chain: DNA-directed RNA polymerase subunit alpha (329 aa).

The segment at 1–235 (MQGSVTEFLK…EQLDAFVDLR (235 aa)) is alpha N-terminal domain (alpha-NTD). An alpha C-terminal domain (alpha-CTD) region spans residues 249-329 (FDPILLRPVD…NWPPASIAED (81 aa)).

Belongs to the RNA polymerase alpha chain family. As to quaternary structure, homodimer. The RNAP catalytic core consists of 2 alpha, 1 beta, 1 beta' and 1 omega subunit. When a sigma factor is associated with the core the holoenzyme is formed, which can initiate transcription.

It catalyses the reaction RNA(n) + a ribonucleoside 5'-triphosphate = RNA(n+1) + diphosphate. DNA-dependent RNA polymerase catalyzes the transcription of DNA into RNA using the four ribonucleoside triphosphates as substrates. The polypeptide is DNA-directed RNA polymerase subunit alpha (Aliivibrio salmonicida (strain LFI1238) (Vibrio salmonicida (strain LFI1238))).